Here is a 423-residue protein sequence, read N- to C-terminus: Diels-Alderase pyiF (423 aa).

The first 17 residues, Met1–Ala17, serve as a signal peptide directing secretion. 3 N-linked (GlcNAc...) asparagine glycosylation sites follow: Asn60, Asn92, and Asn219.

This sequence belongs to the Diels-Alderase family.

It participates in mycotoxin biosynthesis. Diels-Alderase; part of the gene cluster that mediates the biosynthesis of the mycotoxin pyrichalasin H, a tyrosine-derived cytochalasan that inhibits the growth of rice seedlings, but also inhibits lymphocyte capping and actin polymerization and alters cell morphology. Pyrichalasin H is indicated as the responsible agent for the genus-specific pathogenicity of M.grisea toward crabgrass. The first step in the pathway is catalyzed by the O-methyltransferase pyiA which methylates free tyrosine to generate the precursor O-methyltyrosine. The hybrid PKS-NRPS pyiS, assisted by the enoyl reductase pyiC, are responsible for fusion of the O-methyltyrosine precursor and the polyketide backbone. The polyketide synthase module (PKS) of pyiS is responsible for the synthesis of the polyketide backbone and the downstream nonribosomal peptide synthetase (NRPS) amidates the carboxyl end of the polyketide with the O-methyltyrosine precursor. As the NRPS A-domain demonstrates substrate tolerance, pyiS can also use phenylalanine, tyrosine and even para-chlorophenylalanine as amino acid precursor, which leads to the production of novel cytochalasans, including halogenated cytochalasans. Because pyiS lacks a designated enoylreductase (ER) domain, the required activity is provided the enoyl reductase pyiC. Reduction by the hydrolyase pyiE leads to 1,5-dihydropyrrolone, which is substrate for dehydration and intra-molecular Diels-Alder cyclization by the Diels-Alderase pyiF to yield the required isoindolone-fused macrocycle. The tailoring cytochrome P450 monooxygenases piyD and piyG catalyze the hydroxylation at C-18 and C-7, respectivily, whereas the short-chain dehydrogenase/reductase pyiH reduces the carbonyl at C-21 in preparation for the transfer of an acetyl group by the acetyltransferase pyiB. These 3 reactions whose order is not clear yet, lead to the production of O-methylpyrichalasin J, a deacetylated pyrichalasin H. Finally, pyiB to converts O-methylpyrichalasin J into the final product pyrichalasin H via acetylation of C-21. The polypeptide is Diels-Alderase pyiF (Pyricularia grisea (Crabgrass-specific blast fungus)).